The primary structure comprises 406 residues: Endo-xylogalacturonan hydrolase A (406 aa).

The first 18 residues, 1–18, serve as a signal peptide directing secretion; sequence MALYRNLYLLASLGLSSA. PbH1 repeat units follow at residues 183 to 213, 214 to 257, 266 to 289, 299 to 320, and 333 to 375; these read ATNV…DIGE, STYV…SVGS, VKNI…KTYP, VSNV…QIQS, and PGNA…SISG. Catalysis depends on aspartate 228, which acts as the Proton donor. The active site involves histidine 251. 2 N-linked (GlcNAc...) asparagine glycosylation sites follow: asparagine 278 and asparagine 301.

The protein belongs to the glycosyl hydrolase 28 family.

It localises to the secreted. Pectinolytic enzyme involved in the degradation of xylogalacturonan (xga), a galacturonan backbone heavily substituted with xylose, and which is one important component of the hairy regions of pectin. Activity requires a galacturonic acid backbone substituted with xylose. This is Endo-xylogalacturonan hydrolase A (xghA) from Aspergillus tubingensis.